The chain runs to 185 residues: uncharacterized protein (185 aa).

This is an uncharacterized protein from Magallana gigas (Pacific oyster).